Here is a 166-residue protein sequence, read N- to C-terminus: Small ribosomal subunit protein uS5 (166 aa).

The S5 DRBM domain occupies 11–74; sequence LEDRVVAINR…DAARKNLIEV (64 aa).

Belongs to the universal ribosomal protein uS5 family. As to quaternary structure, part of the 30S ribosomal subunit. Contacts proteins S4 and S8.

Its function is as follows. With S4 and S12 plays an important role in translational accuracy. Located at the back of the 30S subunit body where it stabilizes the conformation of the head with respect to the body. The chain is Small ribosomal subunit protein uS5 from Ligilactobacillus salivarius (strain UCC118) (Lactobacillus salivarius).